The primary structure comprises 557 residues: Aerobic glycerol-3-phosphate dehydrogenase (557 aa).

21 to 49 provides a ligand contact to FAD; it reads DLVIIGGGITGAGIALDASERGMKVALVE.

This sequence belongs to the FAD-dependent glycerol-3-phosphate dehydrogenase family. FAD serves as cofactor.

It localises to the cytoplasm. It carries out the reaction a quinone + sn-glycerol 3-phosphate = dihydroxyacetone phosphate + a quinol. Its pathway is polyol metabolism; glycerol degradation via glycerol kinase pathway; glycerone phosphate from sn-glycerol 3-phosphate (aerobic route): step 1/1. This is Aerobic glycerol-3-phosphate dehydrogenase (glpD) from Staphylococcus aureus (strain bovine RF122 / ET3-1).